We begin with the raw amino-acid sequence, 528 residues long: FAD-dependent monooxygenase DEP2 (528 aa).

The signal sequence occupies residues Met-1–Ala-23. 4 residues coordinate FAD: Asp-37, Arg-110, Asp-311, and Gly-324. The helical transmembrane segment at Val-479–Leu-499 threads the bilayer. Asn-521 carries an N-linked (GlcNAc...) asparagine glycan.

Belongs to the paxM FAD-dependent monooxygenase family. The cofactor is FAD.

Its subcellular location is the membrane. It participates in polyketide biosynthesis. Functionally, FAD-dependent monooxygenase; part of the gene cluster that mediates the biosynthesis of depudecin, a highly oxidized eleven-carbon linear polyketide that acts as a histone deacetylase (HDAC) inhibitor and makes a small contribution to pathogenesis. The reducing polyketide synthase DEP5 is the central enzyme in depudecin biosynthesis by yielding the backbone polyketide chain. The monooxygenases DEP2 and DEP4, as well as the uncharacterized protein DEP1, then act as tailoring enzymes to modify the intermediate polyketide chain into depudecin. This Alternaria brassicicola (Dark leaf spot agent) protein is FAD-dependent monooxygenase DEP2.